The following is a 356-amino-acid chain: Probable L-asparaginase 4 (356 aa).

The N-terminal stretch at 1 to 22 (MWGFIVTCGIFLVLLCQLRLLS) is a signal peptide. One can recognise an Asparaginase/glutaminase domain in the interval 36–356 (PNVTVFAMGG…RDIEGLFSIK (321 aa)). Asparagine 37 carries an N-linked (GlcNAc...) asparagine glycan. Threonine 46 (O-isoaspartyl threonine intermediate) is an active-site residue. Asparagine 52 carries N-linked (GlcNAc...) asparagine glycosylation. Residues serine 93 and 126–127 (TD) each bind substrate. An N-linked (GlcNAc...) asparagine glycan is attached at asparagine 176.

This sequence belongs to the asparaginase 1 family.

It is found in the secreted. The protein localises to the cell wall. The catalysed reaction is L-asparagine + H2O = L-aspartate + NH4(+). This chain is Probable L-asparaginase 4, found in Schizosaccharomyces pombe (strain 972 / ATCC 24843) (Fission yeast).